A 421-amino-acid chain; its full sequence is Phosphatidylinositol 5-phosphate 4-kinase type-2 gamma (421 aa).

Ala-2 carries the post-translational modification N-acetylalanine. Phosphoserine is present on Ser-26. In terms of domain architecture, PIPK spans 43–420 (AADPLVGVFL…RFLDFIANIF (378 aa)). The segment at 69 to 75 (VMLLPDD) is required for interaction with PIP5K1A. Ser-349 is subject to Phosphoserine.

Interacts with PIP5K1A; the interaction inhibits PIP5K1A kinase activity. Phosphorylated, phosphorylation is induced by EGF.

It is found in the endoplasmic reticulum. The protein localises to the cytoplasm. The catalysed reaction is a 1,2-diacyl-sn-glycero-3-phospho-(1D-myo-inositol-5-phosphate) + ATP = a 1,2-diacyl-sn-glycero-3-phospho-(1D-myo-inositol-4,5-bisphosphate) + ADP + H(+). It carries out the reaction 1,2-dihexadecanoyl-sn-glycero-3-phospho-(1D-myo-inositol-5-phosphate) + ATP = 1,2-dihexadecanoyl-sn-glycero-3-phospho-(1D-myo-inositol-4,5-bisphosphate) + ADP + H(+). It catalyses the reaction 1,2-dihexadecanoyl-sn-glycero-3-phospho-(1D-myo-inositol-5-phosphate) + GTP = 1,2-dihexadecanoyl-sn-glycero-3-phospho-(1D-myo-inositol-4,5-bisphosphate) + GDP + H(+). In terms of biological role, phosphatidylinositol 5-phosphate 4-kinase with low enzymatic activity. May be a GTP sensor, has higher GTP-dependent kinase activity than ATP-dependent kinase activity. PIP4Ks negatively regulate insulin signaling through a catalytic-independent mechanism. They interact with PIP5Ks and suppress PIP5K-mediated PtdIns(4,5)P2 synthesis and insulin-dependent conversion to PtdIns(3,4,5)P3. The polypeptide is Phosphatidylinositol 5-phosphate 4-kinase type-2 gamma (Mus musculus (Mouse)).